The primary structure comprises 155 residues: SsrA-binding protein (155 aa).

This sequence belongs to the SmpB family.

The protein localises to the cytoplasm. In terms of biological role, required for rescue of stalled ribosomes mediated by trans-translation. Binds to transfer-messenger RNA (tmRNA), required for stable association of tmRNA with ribosomes. tmRNA and SmpB together mimic tRNA shape, replacing the anticodon stem-loop with SmpB. tmRNA is encoded by the ssrA gene; the 2 termini fold to resemble tRNA(Ala) and it encodes a 'tag peptide', a short internal open reading frame. During trans-translation Ala-aminoacylated tmRNA acts like a tRNA, entering the A-site of stalled ribosomes, displacing the stalled mRNA. The ribosome then switches to translate the ORF on the tmRNA; the nascent peptide is terminated with the 'tag peptide' encoded by the tmRNA and targeted for degradation. The ribosome is freed to recommence translation, which seems to be the essential function of trans-translation. This is SsrA-binding protein from Clostridium acetobutylicum (strain ATCC 824 / DSM 792 / JCM 1419 / IAM 19013 / LMG 5710 / NBRC 13948 / NRRL B-527 / VKM B-1787 / 2291 / W).